A 308-amino-acid polypeptide reads, in one-letter code: Putative S-adenosyl-L-methionine-dependent methyltransferase Mmcs_1045 (308 aa).

Residues aspartate 133 and 162–163 contribute to the S-adenosyl-L-methionine site; that span reads DL.

The protein belongs to the UPF0677 family.

Exhibits S-adenosyl-L-methionine-dependent methyltransferase activity. The polypeptide is Putative S-adenosyl-L-methionine-dependent methyltransferase Mmcs_1045 (Mycobacterium sp. (strain MCS)).